Here is a 449-residue protein sequence, read N- to C-terminus: Delta(8)-fatty-acid desaturase 1 (449 aa).

Positions 7–91 (KKYITNEDLK…IRDFQVSEVS (85 aa)) constitute a Cytochrome b5 heme-binding domain. Positions 42 and 65 each coordinate heme. 2 helical membrane-spanning segments follow: residues 113–133 (VTLY…YGVL) and 138–158 (VFAH…SAYI). A Histidine box-1 motif is present at residues 160–164 (HDSGH). A helical membrane pass occupies residues 173–195 (YNRFAQLLSGNCLTGISIAWWKW). The Histidine box-2 signature appears at 197 to 201 (HNAHH). 3 consecutive transmembrane segments (helical) span residues 255-275 (YYPV…LLLF), 284-304 (ALNF…VSCL), and 311-331 (FFFV…FTLN). The short motif at 374–378 (QLEHH) is the Histidine box-3 element.

The protein belongs to the fatty acid desaturase type 1 family. It depends on Fe cation as a cofactor. As to expression, highly expressed in flowers. Expressed in roots, leaves, stems and siliques.

It localises to the endoplasmic reticulum membrane. The catalysed reaction is an N-acyl-(4R)-4-hydroxysphinganine + 2 Fe(II)-[cytochrome b5] + O2 + 2 H(+) = a (4R,8E)-4-hydroxysphingenine ceramide + 2 Fe(III)-[cytochrome b5] + 2 H2O. The enzyme catalyses an N-acyl-(4R)-4-hydroxysphinganine + 2 Fe(II)-[cytochrome b5] + O2 + 2 H(+) = a (4R,8Z)-4-hydroxysphing-8-enine ceramide + 2 Fe(III)-[cytochrome b5] + 2 H2O. Its function is as follows. Plays a major role as delta(8)-fatty-acid desaturase which introduces a double bond at the 8-position in the long-chain base (LCB) of ceramides with or without a hydroxy group at the 4-position. The enzyme produces both the 8E and 8Z isomers (in a 4:1 ratio). This structural modification contributes to the quantitative partitioning of ceramides between the two major sphingolipid classes, glucosylceramides and glycosylinositolphosphoryl ceramides. Sphingolipids are important membrane components involved in environmental stress responses, such as resistance to chilling, and act as cell signaling molecules. The protein is Delta(8)-fatty-acid desaturase 1 (SLD1) of Arabidopsis thaliana (Mouse-ear cress).